The chain runs to 407 residues: Peptidase T (407 aa).

Histidine 77 serves as a coordination point for Zn(2+). Aspartate 79 is a catalytic residue. Aspartate 140 is a Zn(2+) binding site. Glutamate 174 serves as the catalytic Proton acceptor. Zn(2+) is bound by residues glutamate 175, aspartate 197, and histidine 379.

The protein belongs to the peptidase M20B family. It depends on Zn(2+) as a cofactor.

Its subcellular location is the cytoplasm. The catalysed reaction is Release of the N-terminal residue from a tripeptide.. Functionally, cleaves the N-terminal amino acid of tripeptides. The protein is Peptidase T of Bacteroides fragilis (strain YCH46).